The sequence spans 93 residues: MGIKLINIGFGNIVSANRIVAIVSPESAPIKRVIQEARERGVLIDATYGRRTRAVIVTDSDHIILSAVQPETVAHRLNSKDNSKEIESVVDGE.

It belongs to the RemA family.

The chain is Putative regulatory protein Clos_1422 from Alkaliphilus oremlandii (strain OhILAs) (Clostridium oremlandii (strain OhILAs)).